Reading from the N-terminus, the 342-residue chain is Glycerol-1-phosphate dehydrogenase [NAD(P)+] (342 aa).

NAD(+)-binding positions include 84 to 88 (GRPID) and 106 to 109 (TSAS). Residue Asp-111 coordinates substrate. Position 115 (Ser-115) interacts with NAD(+). Asp-160 contributes to the substrate binding site. Residues Asp-160 and His-241 each coordinate Zn(2+). His-245 serves as a coordination point for substrate. His-260 lines the Zn(2+) pocket.

The protein belongs to the glycerol-1-phosphate dehydrogenase family. In terms of assembly, homodimer. The cofactor is Zn(2+).

It localises to the cytoplasm. It carries out the reaction sn-glycerol 1-phosphate + NAD(+) = dihydroxyacetone phosphate + NADH + H(+). The catalysed reaction is sn-glycerol 1-phosphate + NADP(+) = dihydroxyacetone phosphate + NADPH + H(+). The protein operates within membrane lipid metabolism; glycerophospholipid metabolism. Functionally, catalyzes the NAD(P)H-dependent reduction of dihydroxyacetonephosphate (DHAP or glycerone phosphate) to glycerol 1-phosphate (G1P). The G1P thus generated is used as the glycerophosphate backbone of phospholipids in the cellular membranes of Archaea. In Pyrobaculum islandicum (strain DSM 4184 / JCM 9189 / GEO3), this protein is Glycerol-1-phosphate dehydrogenase [NAD(P)+].